Consider the following 92-residue polypeptide: Non-specific lipid-transfer protein A (92 aa).

4 disulfide bridges follow: cysteine 3-cysteine 51, cysteine 13-cysteine 28, cysteine 29-cysteine 74, and cysteine 49-cysteine 88.

It belongs to the plant LTP family.

Plant non-specific lipid-transfer proteins transfer phospholipids as well as galactolipids across membranes. May play a role in wax or cutin deposition in the cell walls of expanding epidermal cells and certain secretory tissues. This is Non-specific lipid-transfer protein A from Ricinus communis (Castor bean).